We begin with the raw amino-acid sequence, 708 residues long: Polyribonucleotide nucleotidyltransferase (708 aa).

Residues Asp-486 and Asp-492 each coordinate Mg(2+). The region spanning Pro-553–Ile-612 is the KH domain. One can recognise an S1 motif domain in the interval Gly-622–Lys-690.

Belongs to the polyribonucleotide nucleotidyltransferase family. Mg(2+) serves as cofactor.

The protein localises to the cytoplasm. The enzyme catalyses RNA(n+1) + phosphate = RNA(n) + a ribonucleoside 5'-diphosphate. Involved in mRNA degradation. Catalyzes the phosphorolysis of single-stranded polyribonucleotides processively in the 3'- to 5'-direction. The protein is Polyribonucleotide nucleotidyltransferase of Nitrosomonas europaea (strain ATCC 19718 / CIP 103999 / KCTC 2705 / NBRC 14298).